The sequence spans 257 residues: Cytochrome c oxidase subunit 3 (257 aa).

6 helical membrane-spanning segments follow: residues 13–33 (PWPITSSISALSLTLGFVSYF), 36–56 (LSMYLILLAVLMITISSFQWW), 80–100 (GMILFILSEVFFFVSFFWAFF), 154–174 (YISALNSLLITILLGVAFTMF), 195–215 (FFMTTGFHGLHVLIGSIFLLV), and 237–257 (AWYWHFVDVVWLFLFTFMYWW).

It belongs to the cytochrome c oxidase subunit 3 family. Component of the cytochrome c oxidase (complex IV, CIV), a multisubunit enzyme composed of a catalytic core of 3 subunits and several supernumerary subunits. The complex exists as a monomer or a dimer and forms supercomplexes (SCs) in the inner mitochondrial membrane with ubiquinol-cytochrome c oxidoreductase (cytochrome b-c1 complex, complex III, CIII).

The protein localises to the mitochondrion inner membrane. The enzyme catalyses 4 Fe(II)-[cytochrome c] + O2 + 8 H(+)(in) = 4 Fe(III)-[cytochrome c] + 2 H2O + 4 H(+)(out). Functionally, component of the cytochrome c oxidase, the last enzyme in the mitochondrial electron transport chain which drives oxidative phosphorylation. The respiratory chain contains 3 multisubunit complexes succinate dehydrogenase (complex II, CII), ubiquinol-cytochrome c oxidoreductase (cytochrome b-c1 complex, complex III, CIII) and cytochrome c oxidase (complex IV, CIV), that cooperate to transfer electrons derived from NADH and succinate to molecular oxygen, creating an electrochemical gradient over the inner membrane that drives transmembrane transport and the ATP synthase. Cytochrome c oxidase is the component of the respiratory chain that catalyzes the reduction of oxygen to water. Electrons originating from reduced cytochrome c in the intermembrane space (IMS) are transferred via the dinuclear copper A center (CU(A)) of subunit 2 and heme A of subunit 1 to the active site in subunit 1, a binuclear center (BNC) formed by heme A3 and copper B (CU(B)). The BNC reduces molecular oxygen to 2 water molecules using 4 electrons from cytochrome c in the IMS and 4 protons from the mitochondrial matrix. The chain is Cytochrome c oxidase subunit 3 (COIII) from Rhipicephalus sanguineus (Brown dog tick).